The primary structure comprises 302 residues: S-crystallin SL4 (302 aa).

3 tandem repeats follow at residues 45-54 (GGYAVQSRGD), 55-64 (GGYYVKSRGD), and 65-74 (GGYPVQGRGD). The 4 X approximate tandem repeats of G-G-Y-[AYP]-V-[QK]-[SG]-R-G-D stretch occupies residues 45–84 (GGYAVQSRGDGGYYVKSRGDGGYPVQGRGDTGYSSQTRSD). 3 consecutive short sequence motifs (cell attachment site) follow at residues 52 to 54 (RGD), 62 to 64 (RGD), and 72 to 74 (RGD). The interval 68 to 92 (PVQGRGDTGYSSQTRSDDACLGQGR) is disordered. The stretch at 75–84 (TGYSSQTRSD) is one 4; approximate repeat. Positions 113-115 (RGD) match the Cell attachment site motif. The tract at residues 118–205 (SDINSGLYSG…ESASRRSRNH (88 aa)) is disordered. 2 stretches are compositionally biased toward basic and acidic residues: residues 129–166 (RMDD…HYRS) and 177–192 (AEDR…RIDI). The GST C-terminal domain occupies 183 to 302 (GHSDSHRIDI…YIKRRYQSDF (120 aa)).

Belongs to the GST superfamily.

Functionally, S-crystallins are structural components of squids and octopi eye lens. This Nototodarus sloanii (Wellington flying squid) protein is S-crystallin SL4.